A 533-amino-acid polypeptide reads, in one-letter code: Nitrogen fixation protein AnfA (533 aa).

Residues 33-193 (ILYKISQIIT…PLVELYLIEN (161 aa)) are a domain. Residues 46-186 (DLADALSIVL…MIATMIAPLV (141 aa)) enclose the GAF domain. Residues 219-448 (IIGNSKPMQE…LENVMERAVI (230 aa)) form the Sigma-54 factor interaction domain. ATP-binding positions include 247-254 (GESGVGKE) and 310-319 (ADGGTIFLDE). A DNA-binding region (H-T-H motif) is located at residues 501–520 (IGEAAKELGLARRMLGVRME).

Its function is as follows. AnfA is essential for nitrogen fixation under Mo- and V-deficient conditions. It is required for the regulation of nitrogenase 3 transcription. Interacts with sigma-54. This Azotobacter vinelandii protein is Nitrogen fixation protein AnfA (anfA).